Consider the following 608-residue polypeptide: Fatty acid amide hydrolase (608 aa).

Residues Lys206 and Ser282 each act as charge relay system in the active site. 303–306 (GGGS) lines the substrate pocket. The Acyl-ester intermediate role is filled by Ser306.

Belongs to the amidase family. Forms homodimers.

It localises to the endoplasmic reticulum membrane. It is found in the cell membrane. The catalysed reaction is N-(9Z,12Z-octadecadienoyl)-ethanolamine + H2O = ethanolamine + (9Z,12Z)-octadecadienoate. The enzyme catalyses N-hexadecanoylethanolamine + H2O = ethanolamine + hexadecanoate. It carries out the reaction N-dodecanoylethanolamine + H2O = dodecanoate + ethanolamine. Inhibited by methyl arachidonyl fluorophosphonate (MAFP). Catalyzes the hydrolysis of bioactive endogenous fatty acid amides to their corresponding acids. The hydrolysis of endogenous amidated lipids terminates their participation as lipid mediators in various signaling systems. Converts a wide range of N-acylethanolamines (NAEs) to their corresponding free fatty acids and ethanolamine. The protein is Fatty acid amide hydrolase of Oryza sativa subsp. indica (Rice).